The sequence spans 520 residues: Cobyric acid synthase (520 aa).

Residues 257 to 451 (WLTVAAVRLP…VHGLLESDGF (195 aa)) enclose the GATase cobBQ-type domain. The active-site Nucleophile is the C338. H443 is an active-site residue.

Belongs to the CobB/CobQ family. CobQ subfamily.

Its pathway is cofactor biosynthesis; adenosylcobalamin biosynthesis. Functionally, catalyzes amidations at positions B, D, E, and G on adenosylcobyrinic A,C-diamide. NH(2) groups are provided by glutamine, and one molecule of ATP is hydrogenolyzed for each amidation. The protein is Cobyric acid synthase of Nocardia farcinica (strain IFM 10152).